The sequence spans 317 residues: Ribose-phosphate pyrophosphokinase (317 aa).

ATP contacts are provided by residues 43–45 (DGE) and 102–103 (RQ). Residues His136 and Asp175 each contribute to the Mg(2+) site. Lys198 is an active-site residue. D-ribose 5-phosphate is bound by residues Arg200, Asp224, and 228 to 232 (DTAGT).

The protein belongs to the ribose-phosphate pyrophosphokinase family. Class I subfamily. In terms of assembly, homohexamer. It depends on Mg(2+) as a cofactor.

Its subcellular location is the cytoplasm. It carries out the reaction D-ribose 5-phosphate + ATP = 5-phospho-alpha-D-ribose 1-diphosphate + AMP + H(+). It participates in metabolic intermediate biosynthesis; 5-phospho-alpha-D-ribose 1-diphosphate biosynthesis; 5-phospho-alpha-D-ribose 1-diphosphate from D-ribose 5-phosphate (route I): step 1/1. Involved in the biosynthesis of the central metabolite phospho-alpha-D-ribosyl-1-pyrophosphate (PRPP) via the transfer of pyrophosphoryl group from ATP to 1-hydroxyl of ribose-5-phosphate (Rib-5-P). The chain is Ribose-phosphate pyrophosphokinase from Oceanobacillus iheyensis (strain DSM 14371 / CIP 107618 / JCM 11309 / KCTC 3954 / HTE831).